We begin with the raw amino-acid sequence, 369 residues long: Aspartate beta-hydroxylase domain-containing protein 2 (369 aa).

The Cytoplasmic segment spans residues Met-1–Thr-58. A helical transmembrane segment spans residues Thr-59–Gly-79. The Lumenal portion of the chain corresponds to Arg-80–Arg-369. Asn-211 carries an N-linked (GlcNAc...) asparagine glycan. The 2-oxoglutarate site is built by Trp-228 and Ser-272. Residue His-283 coordinates Fe cation. Residue Arg-292–His-294 coordinates 2-oxoglutarate. A Fe cation-binding site is contributed by His-328. Arg-341 contacts 2-oxoglutarate.

The protein belongs to the aspartyl/asparaginyl beta-hydroxylase family. Fe cation is required as a cofactor.

The protein localises to the membrane. May function as 2-oxoglutarate-dependent dioxygenase. This Homo sapiens (Human) protein is Aspartate beta-hydroxylase domain-containing protein 2 (ASPHD2).